The chain runs to 151 residues: Ribosome maturation factor RimP (151 aa).

The protein belongs to the RimP family.

It localises to the cytoplasm. Functionally, required for maturation of 30S ribosomal subunits. This is Ribosome maturation factor RimP from Synechocystis sp. (strain ATCC 27184 / PCC 6803 / Kazusa).